Here is a 301-residue protein sequence, read N- to C-terminus: Protoheme IX farnesyltransferase (301 aa).

9 consecutive transmembrane segments (helical) span residues 9–29, 42–62, 89–109, 113–133, 142–162, 168–188, 211–231, 232–252, and 280–300; these read VLAY…VATI, IALI…ANSL, TSHA…WLWW, LLAG…YTMV, VVWG…AVTG, PIVL…ALAM, VTKQ…TLVP, AAGV…LLMA, and VVFV…GSLL.

Belongs to the UbiA prenyltransferase family. Protoheme IX farnesyltransferase subfamily.

It is found in the cell membrane. It catalyses the reaction heme b + (2E,6E)-farnesyl diphosphate + H2O = Fe(II)-heme o + diphosphate. The protein operates within porphyrin-containing compound metabolism; heme O biosynthesis; heme O from protoheme: step 1/1. In terms of biological role, converts heme B (protoheme IX) to heme O by substitution of the vinyl group on carbon 2 of heme B porphyrin ring with a hydroxyethyl farnesyl side group. The polypeptide is Protoheme IX farnesyltransferase (Rhodococcus jostii (strain RHA1)).